Reading from the N-terminus, the 546-residue chain is Chaperonin GroEL (546 aa).

Residues 30 to 33, Lys-51, 87 to 91, Gly-415, 479 to 481, and Asp-495 each bind ATP; these read TLGP, DGTTT, and NAA. Residues 527–546 form a disordered region; it reads DESAAPAMPGGMGGMGDMGM. Gly residues predominate over residues 536 to 546; sequence GGMGGMGDMGM.

Belongs to the chaperonin (HSP60) family. Forms a cylinder of 14 subunits composed of two heptameric rings stacked back-to-back. Interacts with the co-chaperonin GroES.

It is found in the cytoplasm. It carries out the reaction ATP + H2O + a folded polypeptide = ADP + phosphate + an unfolded polypeptide.. Its function is as follows. Together with its co-chaperonin GroES, plays an essential role in assisting protein folding. The GroEL-GroES system forms a nano-cage that allows encapsulation of the non-native substrate proteins and provides a physical environment optimized to promote and accelerate protein folding. The polypeptide is Chaperonin GroEL (Acidovorax ebreus (strain TPSY) (Diaphorobacter sp. (strain TPSY))).